Consider the following 252-residue polypeptide: Biosynthetic peptidoglycan transglycosylase (252 aa).

Residues 23–43 (IGFLLGCIVAGVVAMQVYFFL) form a helical membrane-spanning segment.

The protein belongs to the glycosyltransferase 51 family.

Its subcellular location is the cell inner membrane. It carries out the reaction [GlcNAc-(1-&gt;4)-Mur2Ac(oyl-L-Ala-gamma-D-Glu-L-Lys-D-Ala-D-Ala)](n)-di-trans,octa-cis-undecaprenyl diphosphate + beta-D-GlcNAc-(1-&gt;4)-Mur2Ac(oyl-L-Ala-gamma-D-Glu-L-Lys-D-Ala-D-Ala)-di-trans,octa-cis-undecaprenyl diphosphate = [GlcNAc-(1-&gt;4)-Mur2Ac(oyl-L-Ala-gamma-D-Glu-L-Lys-D-Ala-D-Ala)](n+1)-di-trans,octa-cis-undecaprenyl diphosphate + di-trans,octa-cis-undecaprenyl diphosphate + H(+). Its pathway is cell wall biogenesis; peptidoglycan biosynthesis. Functionally, peptidoglycan polymerase that catalyzes glycan chain elongation from lipid-linked precursors. In Cupriavidus pinatubonensis (strain JMP 134 / LMG 1197) (Cupriavidus necator (strain JMP 134)), this protein is Biosynthetic peptidoglycan transglycosylase.